The sequence spans 508 residues: Photosystem II CP47 reaction center protein (508 aa).

6 helical membrane passes run 21-36, 101-115, 140-156, 203-218, 237-252, and 457-472; these read SVHIMHTALVSGWAGS, IVFSGLCFLAAIWHW, GIHLFLSGVACFGFGAF, IAAGTLGILAGLFHLS, VLSSSIAAVFFAAFVV, and TFALLFFFGHIWHGAR.

The protein belongs to the PsbB/PsbC family. PsbB subfamily. In terms of assembly, PSII is composed of 1 copy each of membrane proteins PsbA, PsbB, PsbC, PsbD, PsbE, PsbF, PsbH, PsbI, PsbJ, PsbK, PsbL, PsbM, PsbT, PsbX, PsbY, PsbZ, Psb30/Ycf12, at least 3 peripheral proteins of the oxygen-evolving complex and a large number of cofactors. It forms dimeric complexes. Binds multiple chlorophylls. PSII binds additional chlorophylls, carotenoids and specific lipids. serves as cofactor.

The protein resides in the plastid. The protein localises to the chloroplast thylakoid membrane. One of the components of the core complex of photosystem II (PSII). It binds chlorophyll and helps catalyze the primary light-induced photochemical processes of PSII. PSII is a light-driven water:plastoquinone oxidoreductase, using light energy to abstract electrons from H(2)O, generating O(2) and a proton gradient subsequently used for ATP formation. The polypeptide is Photosystem II CP47 reaction center protein (Chloranthus spicatus (Chulantree)).